Here is a 924-residue protein sequence, read N- to C-terminus: Exocyst complex component 2 (924 aa).

The IPT/TIG domain occupies 8–93; it reads PLVTGISPNE…GTSTVSFKLL (86 aa). Positions 240–260 form a coiled coil; the sequence is QKLENVLNRASNTADTLFQEV. Residues Ser431, Ser432, and Ser435 each carry the phosphoserine modification. Thr440 is modified (phosphothreonine). Lys454 is modified (N6-acetyllysine).

The protein belongs to the SEC5 family. The exocyst complex is composed of EXOC1, EXOC2, EXOC3, EXOC4, EXOC5, EXOC6, EXOC7 and EXOC8. Interacts with EXOC3L1. Interacts with GNEFR/DELGEF; this interaction occurs only in the presence of magnesium or manganese and is stimulated by dCTP or GTP. Interacts with RALA and RALB. Interacts with ARL13B; regulates ARL13B localization to the cilium membrane.

The protein localises to the midbody. The protein resides in the midbody ring. Functionally, component of the exocyst complex involved in the docking of exocytic vesicles with fusion sites on the plasma membrane. This Mus musculus (Mouse) protein is Exocyst complex component 2 (Exoc2).